We begin with the raw amino-acid sequence, 315 residues long: Glutamyl-Q tRNA(Asp) synthetase (315 aa).

L-glutamate contacts are provided by residues 23–27 and E59; that span reads RFAPS. The 'HIGH' region motif lies at 26 to 36; the sequence is PSPTGPLHIGS. Residues C115, C117, Y142, and C146 each contribute to the Zn(2+) site. 2 residues coordinate L-glutamate: Y202 and R220. Residues 258 to 262 carry the 'KMSKS' region motif; that stretch reads KLSKQ. An ATP-binding site is contributed by K261.

This sequence belongs to the class-I aminoacyl-tRNA synthetase family. GluQ subfamily. Zn(2+) is required as a cofactor.

Catalyzes the tRNA-independent activation of glutamate in presence of ATP and the subsequent transfer of glutamate onto a tRNA(Asp). Glutamate is transferred on the 2-amino-5-(4,5-dihydroxy-2-cyclopenten-1-yl) moiety of the queuosine in the wobble position of the QUC anticodon. The sequence is that of Glutamyl-Q tRNA(Asp) synthetase from Ralstonia nicotianae (strain ATCC BAA-1114 / GMI1000) (Ralstonia solanacearum).